Here is a 119-residue protein sequence, read N- to C-terminus: Dihydroneopterin aldolase (119 aa).

Residues Glu-21, Tyr-53, and 72-73 each bind substrate; that span reads ID. Lys-99 serves as the catalytic Proton donor/acceptor.

This sequence belongs to the DHNA family.

The enzyme catalyses 7,8-dihydroneopterin = 6-hydroxymethyl-7,8-dihydropterin + glycolaldehyde. The protein operates within cofactor biosynthesis; tetrahydrofolate biosynthesis; 2-amino-4-hydroxy-6-hydroxymethyl-7,8-dihydropteridine diphosphate from 7,8-dihydroneopterin triphosphate: step 3/4. In terms of biological role, catalyzes the conversion of 7,8-dihydroneopterin to 6-hydroxymethyl-7,8-dihydropterin. This Streptococcus pyogenes protein is Dihydroneopterin aldolase (folB).